The sequence spans 443 residues: EGF-containing fibulin-like extracellular matrix protein 2 (443 aa).

Positions 1–25 (MLPFASCLPGSLLLWALLLLLLGAA) are cleaved as a signal peptide. One can recognise an EGF-like 1; atypical domain in the interval 36-81 (YTECTDGYEWDADSQHCRDVNECLTIPEACKGEMKCINHYGGYLCL). 18 disulfide bridges follow: cysteine 58–cysteine 121, cysteine 65–cysteine 80, cysteine 71–cysteine 109, cysteine 127–cysteine 140, cysteine 134–cysteine 149, cysteine 151–cysteine 162, cysteine 168–cysteine 177, cysteine 173–cysteine 186, cysteine 188–cysteine 201, cysteine 207–cysteine 217, cysteine 213–cysteine 226, cysteine 228–cysteine 241, cysteine 247–cysteine 258, cysteine 254–cysteine 267, cysteine 269–cysteine 281, cysteine 287–cysteine 300, cysteine 294–cysteine 309, and cysteine 315–cysteine 327. An EGF-like 2; calcium-binding domain is found at 123 to 163 (DVDECAQALHDCRPSQDCHNLPGSYQCTCPDGYRKVGPECV). An EGF-like 3; calcium-binding domain is found at 164–202 (DIDECRYRYCQHRCVNLPGSFRCQCEPGFQLGPNNRSCV). Asparagine 198 carries an N-linked (GlcNAc...) asparagine glycan. Residues 203-242 (DVNECDMGAPCEQRCFNSYGTFLCRCNQGYELHRDGFSCS) enclose the EGF-like 4; calcium-binding domain. The EGF-like 5; calcium-binding domain maps to 243–282 (DIDECSYSSYLCQYRCVNEPGRFSCHCPQGYQLLATRLCQ). An EGF-like 6; calcium-binding domain is found at 283 to 328 (DIDECETGAHQCSEAQTCVNFHGGYRCVDTNRCVEPYVQVSDNRCF). N-linked (GlcNAc...) asparagine glycosylation is present at asparagine 394.

This sequence belongs to the fibulin family. Homodimer; disulfide-linked. Multimer; allows heparin binding. Monomer. Interacts with FBN1 (via N-terminal domain); this interaction inhibits EFEMP2 binding to LOX and ELN. Interacts with LOX (via propeptide); this interaction is strong and facilitates formation of ternary complexes with ELN during elastic fiber assembly; this interaction limits interaction of EFEMP2 with FBLN5. Interacts with PITX2. Interacts with ELN with moderate affinity; this interaction regulates ELN self-assembly maturation stage. Interacts with FBLN5 with moderate affinity. Interacts with LOXL1 (via propeptide), LTBP1 and TGFB1 stronger than with LOXL2 and LTBP3. Interacts with PCOLCE. Interacts with collagen type IV trimer (COL4A1-COL4A1-COL4A2), NID2 and moderately with COL15A1-derived endostatin. Interacts with EMILIN1; this interaction promotes the incorporation of EFEMP2 into the extracellular matrix. Interacts with LTBP4; the LTBP4 long form (LTBP4L) has a stronger binding affinity than the LTBP4 short form and the LTBP4 long form promotes fibrillar deposition of EFEMP2. In terms of processing, N-glycosylated; contains mostly complex-type glycans. Not O-glycosylated. Cleaved by ELANE; produces a 50-55 kDa fragment. Cleaved by MMP2 and MMP9; produces several fragments.

The protein resides in the secreted. It localises to the extracellular space. It is found in the extracellular matrix. The protein localises to the basement membrane. In terms of biological role, plays a crucial role in elastic fiber formation in tissue, and in the formation of ultrastructural connections between elastic laminae and smooth muscle cells in the aorta, therefore participates in terminal differentiation and maturation of smooth muscle cell (SMC) and in the mechanical properties and wall integrity maintenance of the aorta. In addition, is involved in the control of collagen fibril assembly in tissue throught proteolytic activation of LOX leading to cross- linking of collagen and elastin. Also promotes ELN coacervation and participates in the deposition of ELN coacervates on to microfibrils but also regulates ELN cross- linking through LOX interaction. Moreover adheres to the cells through heparin binding in a calcium-dependent manner and regulates vascularlar smooth muscle cells proliferation through angiotensin signaling. In Cricetulus griseus (Chinese hamster), this protein is EGF-containing fibulin-like extracellular matrix protein 2.